The primary structure comprises 481 residues: Cys-Gly metallodipeptidase DUG1 (481 aa).

Residue histidine 102 coordinates Zn(2+). Residue aspartate 104 is part of the active site. Aspartate 137 is a binding site for Zn(2+). Residue glutamate 171 is the Proton acceptor of the active site. The Zn(2+) site is built by glutamate 172, aspartate 200, and histidine 450. Residue serine 451 is modified to Phosphoserine.

Belongs to the peptidase M20A family. Homodimer. Component of the GSH degradosomal complex composed of at least DUG1, DUG2 and DUG3. The cofactor is Zn(2+). Requires Mn(2+) as cofactor.

The protein resides in the cytoplasm. It is found in the mitochondrion. Functionally, catalytic component of the GSH degradosomal complex involved in the degradation of glutathione (GSH) and other peptides containing a gamma-glu-X bond. Also functions in a DUG2-DUG3-independent manner as a dipeptidase with high specificity for Cys-Gly and no activity toward tri- or tetrapeptides. The polypeptide is Cys-Gly metallodipeptidase DUG1 (DUG1) (Saccharomyces cerevisiae (strain ATCC 204508 / S288c) (Baker's yeast)).